We begin with the raw amino-acid sequence, 93 residues long: Large ribosomal subunit protein uL23cz/uL23cy (93 aa).

Belongs to the universal ribosomal protein uL23 family. In terms of assembly, part of the 50S ribosomal subunit.

The protein resides in the plastid. It is found in the chloroplast. In terms of biological role, binds to 23S rRNA. The protein is Large ribosomal subunit protein uL23cz/uL23cy (rpl23-A) of Helianthus annuus (Common sunflower).